The primary structure comprises 101 residues: Large ribosomal subunit protein uL23 (101 aa).

The protein belongs to the universal ribosomal protein uL23 family. As to quaternary structure, part of the 50S ribosomal subunit. Contacts protein L29, and trigger factor when it is bound to the ribosome.

One of the early assembly proteins it binds 23S rRNA. One of the proteins that surrounds the polypeptide exit tunnel on the outside of the ribosome. Forms the main docking site for trigger factor binding to the ribosome. The sequence is that of Large ribosomal subunit protein uL23 from Histophilus somni (strain 129Pt) (Haemophilus somnus).